The following is a 479-amino-acid chain: UDP-N-acetylmuramoyl-L-alanyl-D-glutamate--2,6-diaminopimelate ligase (479 aa).

UDP-N-acetyl-alpha-D-muramoyl-L-alanyl-D-glutamate is bound at residue Ser21. 98–104 (GTNGKSS) contacts ATP. UDP-N-acetyl-alpha-D-muramoyl-L-alanyl-D-glutamate is bound by residues 144 to 145 (TT), Ser171, Gln177, and Arg179. Lys211 bears the N6-carboxylysine mark. Meso-2,6-diaminopimelate contacts are provided by residues Arg372, 396-399 (DNPR), Gly446, and Glu450. The Meso-diaminopimelate recognition motif signature appears at 396-399 (DNPR).

This sequence belongs to the MurCDEF family. MurE subfamily. Mg(2+) serves as cofactor. Carboxylation is probably crucial for Mg(2+) binding and, consequently, for the gamma-phosphate positioning of ATP.

It is found in the cytoplasm. It carries out the reaction UDP-N-acetyl-alpha-D-muramoyl-L-alanyl-D-glutamate + meso-2,6-diaminopimelate + ATP = UDP-N-acetyl-alpha-D-muramoyl-L-alanyl-gamma-D-glutamyl-meso-2,6-diaminopimelate + ADP + phosphate + H(+). It participates in cell wall biogenesis; peptidoglycan biosynthesis. Catalyzes the addition of meso-diaminopimelic acid to the nucleotide precursor UDP-N-acetylmuramoyl-L-alanyl-D-glutamate (UMAG) in the biosynthesis of bacterial cell-wall peptidoglycan. The chain is UDP-N-acetylmuramoyl-L-alanyl-D-glutamate--2,6-diaminopimelate ligase from Rickettsia conorii (strain ATCC VR-613 / Malish 7).